Consider the following 325-residue polypeptide: MAPRLEFEKPVIELQTKIAELKKFTQDSDMDLSAEIERLEDRLAKLQDDIYKNLKPWDRVQIARLADRPTTLDYIEHLFTDFFECHGDRAYGDDEAIVGGIAKFHGLPVTVIGHQRGKDTKENLVRNFGMPHPEGYRKALRLMKQADKFNRPIICFIDTKGAYPGRAAEERGQSEAIAKNLFEMAGLRVPVICIVIGEGGSGGALGLGVGNHLHMLENSTYSVISPEGAAALLWKDSSLAKKAAETMKITAPDLKELGIIDHMIKEVKGGAHHDVKLQASYMDETLKQSLKTLLKLSEEELVQQRYEKYKAIGKVSVEDQYIGVN.

In terms of domain architecture, CoA carboxyltransferase C-terminal spans 38 to 292 (RLEDRLAKLQ…DETLKQSLKT (255 aa)).

It belongs to the AccA family. Acetyl-CoA carboxylase is a heterohexamer composed of biotin carboxyl carrier protein (AccB), biotin carboxylase (AccC) and two subunits each of ACCase subunit alpha (AccA) and ACCase subunit beta (AccD).

Its subcellular location is the cytoplasm. The catalysed reaction is N(6)-carboxybiotinyl-L-lysyl-[protein] + acetyl-CoA = N(6)-biotinyl-L-lysyl-[protein] + malonyl-CoA. It functions in the pathway lipid metabolism; malonyl-CoA biosynthesis; malonyl-CoA from acetyl-CoA: step 1/1. Its activity is regulated as follows. Inhibited by pyrrolidine dione antibiotics moiramide B (CPD1) and CPD2. Component of the acetyl coenzyme A carboxylase (ACC) complex. First, biotin carboxylase catalyzes the carboxylation of biotin on its carrier protein (BCCP) and then the CO(2) group is transferred by the carboxyltransferase to acetyl-CoA to form malonyl-CoA. The polypeptide is Acetyl-coenzyme A carboxylase carboxyl transferase subunit alpha (Bacillus subtilis (strain 168)).